The sequence spans 238 residues: DNA repair protein RecO (238 aa).

Belongs to the RecO family.

Involved in DNA repair and RecF pathway recombination. This is DNA repair protein RecO from Anaplasma marginale (strain Florida).